A 1499-amino-acid chain; its full sequence is Rho GTPase-activating protein 35 (1499 aa).

The segment at 1–266 is has GTPase activity, required for proper localization; it reads MMMARKQDVR…IPYFEALKQQ (266 aa). GTP contacts are provided by residues Lys28, 33 to 37, Leu52, Ser56, 95 to 97, 201 to 203, and 229 to 231; these read IGKSC, EQT, KCD, and SAR. FF domains are found at residues 270-327, 368-422, 429-483, and 485-550; these read IATA…HIHR, KLLE…HLEK, RAEM…HQKQ, and IDRA…HIHF. Tyr308 is modified (phosphotyrosine). A Phosphoserine modification is found at Ser589. Positions 592–767 constitute a pG1 pseudoGTPase domain; it reads DPNIDRINLV…LLDSKRNLNL (176 aa). Ser770 and Ser773 each carry phosphoserine. The pG2 pseudoGTPase domain maps to 783–947; it reads RIVMCLMCGD…FKDVVEKKNI (165 aa). A phosphoserine mark is found at Ser970, Ser975, Ser985, and Ser1072. At Tyr1087 the chain carries Phosphotyrosine. Phosphotyrosine; by ABL2 and PTK6 is present on Tyr1105. The span at 1124 to 1141 shows a compositional bias: polar residues; sequence KAQSNGSGNGSDSEMDTS. The tract at residues 1124-1148 is disordered; that stretch reads KAQSNGSGNGSDSEMDTSSLERGRK. Phosphoserine is present on residues Ser1134, Ser1142, Ser1150, Ser1176, Ser1179, and Ser1221. A disordered region spans residues 1177-1207; it reads VGSDDELGPIRKKEEDQASQGYKGDNAVIPY. The segment at 1213-1236 is required for phospholipid binding and regulation of the substrate preference; sequence PRRRNILRSLRRNTKKPKPKPRPS. The residue at position 1226 (Thr1226) is a Phosphothreonine. Ser1236 carries the phosphoserine modification. Positions 1249–1436 constitute a Rho-GAP domain; it reads VPLTTVVTPE…LFIQQCPFFF (188 aa). The disordered stretch occupies residues 1446-1499; it reads GAAPGSPSAMAPTVPFLTSTPATSQPSPPQSPPPTPQSPMQPLLSSQLQAEHTL. The segment covering 1448 to 1470 has biased composition (low complexity); the sequence is APGSPSAMAPTVPFLTSTPATSQ. The segment covering 1471-1484 has biased composition (pro residues); it reads PSPPQSPPPTPQSP. Ser1472 and Ser1476 each carry phosphoserine. The residue at position 1480 (Thr1480) is a Phosphothreonine. Position 1483 is a phosphoserine (Ser1483). Residues 1485-1499 show a composition bias toward low complexity; the sequence is MQPLLSSQLQAEHTL.

As to quaternary structure, interacts with RASA1. Interacts with the general transcription factor GTF2I, the interaction sequesters GTF2I in the cytoplasm. In terms of processing, phosphorylation of Tyr-1105 by PTK6 promotes the association with RASA1, inactivating RHOA while activating RAS. Phosphorylation at Tyr-308 by PDGFRA inhibits binding to GTF2I. Phosphorylated by PRKCA at Ser-1221 and Thr-1226, induces relocalization from the cytoplasm to regions of plasma membrane ruffling and prevents the binding and substrate specificity regulation by phospholipids. In brain, phosphorylated by FYN and SRC. During focal adhesion formation, phosphorylated by MAPK1 and MAPK3 at the C-terminal region, probably at Ser-1451, Ser-1476, Thr-1480 and Ser-1483. Phosphorylation by MAPK1 and MAPK3 inhibits GAP function and localizes ARGHAP35 away from newly forming focal adhesions and stress fibers in cells spreading on fibronectin. Phosphorylation at Ser-1476 and Thr-1480 by GSK3B requires priming by MAPK and inhibits RhoGAP activity and modulates polarized cell migration. As to expression, ubiquitously expressed.

The protein resides in the cytoplasm. It localises to the cytoskeleton. It is found in the cilium basal body. Its subcellular location is the nucleus. The protein localises to the cell membrane. Rho GTPase-activating protein (GAP). Binds several acidic phospholipids which inhibits the Rho GAP activity to promote the Rac GAP activity. This binding is inhibited by phosphorylation by PRKCA. Involved in cell differentiation as well as cell adhesion and migration, plays an important role in retinal tissue morphogenesis, neural tube fusion, midline fusion of the cerebral hemispheres and mammary gland branching morphogenesis. Transduces signals from p21-ras to the nucleus, acting via the ras GTPase-activating protein (GAP). Transduces SRC-dependent signals from cell-surface adhesion molecules, such as laminin, to promote neurite outgrowth. Regulates axon outgrowth, guidance and fasciculation. Modulates Rho GTPase-dependent F-actin polymerization, organization and assembly, is involved in polarized cell migration and in the positive regulation of ciliogenesis and cilia elongation. During mammary gland development, is required in both the epithelial and stromal compartments for ductal outgrowth. Represses transcription of the glucocorticoid receptor by binding to the cis-acting regulatory sequence 5'-GAGAAAAGAAACTGGAGAAACTC-3'; this function is however unclear and would need additional experimental evidences. This Rattus norvegicus (Rat) protein is Rho GTPase-activating protein 35.